Reading from the N-terminus, the 224-residue chain is Small ribosomal subunit protein uS2 (224 aa).

A compositionally biased stretch (basic and acidic residues) spans 1-14; the sequence is MAEAKPAPEKEAAV. The disordered stretch occupies residues 1-32; that stretch reads MAEAKPAPEKEAAVKTESVPVADDEAASAKEG.

This sequence belongs to the universal ribosomal protein uS2 family.

This chain is Small ribosomal subunit protein uS2, found in Methanosarcina mazei (strain ATCC BAA-159 / DSM 3647 / Goe1 / Go1 / JCM 11833 / OCM 88) (Methanosarcina frisia).